Consider the following 473-residue polypeptide: UTP--glucose-1-phosphate uridylyltransferase (473 aa).

UTP-binding positions include 89–92, Lys-103, Gln-166, and Gly-195; that span reads LNGG. 91 to 92 is a binding site for substrate; sequence GG. Substrate is bound by residues His-196 and 224–226; that span reads NSD. Asp-226 and Lys-364 together coordinate UTP.

This sequence belongs to the UDPGP type 1 family.

The protein localises to the cytoplasm. It carries out the reaction alpha-D-glucose 1-phosphate + UTP + H(+) = UDP-alpha-D-glucose + diphosphate. Plays a central role as a glucosyl donor in cellular metabolic pathways. The chain is UTP--glucose-1-phosphate uridylyltransferase from Hordeum vulgare (Barley).